The chain runs to 1475 residues: MFKRRALGFLLAFLLVFTAVFGSMPMEFAKAETDTAPAIANVVGNFQSKLGDSDWNINSDKTIMTYKGNGFYEFTTPVALPAGDYEYKVALNHSWEGGGVPSQGNLSFHLDSDSVVTFYYNYNTSSITDSTKYTPIPEDKLPRLVGTIQPAIGAGDDWKPETSTAIMRDYKFNNVYEYTANVPKGNYEFKVTLGPSWDINYGLNGEQNGPNIPLNVAYDTKITFYYDSVSHNIWTDYNPPLTGPDNNIYYDDLRHDTHDPFFRSPFGAIKTGDTVTLRIQAKNHDIESAKISYWDDIKKTRIEVPMYRIGQSPDGKYEYWEVKLSFDHPTRIWYYFILKDGTKTAYYGDNDEQLGGVGKATDTENKDFELTVYDKNLDTPDWMKGSVMYQIFPDRFFNGDSSNDHLKKYSRGFDPVEYHSNWYELPDNPNDKNKLGYTGDGIWSNDFFGGDLKGIDDKLDYLKSLGISVIYLNPIFQSPSNHRYDTTDYTKIDELLGDLSTFKKLMEDAHAKGIKVILDGVFNHTSDDSIYFDRYGKYLNTGVLGAYQAWKQGDQSKSPYGDWYEIKPDGTYEGWWGFDSLPVIRQINGSEYNVKSWADFIINNPNAISKYWLNPDGDKNVGADGWRLDVANEVAHDFWVHFRGAINTVKPNAPMVAENWNDASLDLLGDSFNSVMNYLFRNAVIDFILDKSFDDGNVVHNPIDAAKLDQRLMSIYERYPLPVFYSTMNLLGSHDTMRILTVFGYNSADENQNSQAAKDLAVKRLKLAAILQMGYPGMPSIYYGDEAGQSGGKDPDNRRTFPWGREDTDLQTFFKKVVNIRNENQVLKTGDLETLYANGDVYAFGRRIINGKDTFGKSYPDSVAIVVINKGDAKQVSIDTTKFIRDGVAFTDALSGKTYTVQDGKIVVEVGSMDGAILISDTGQNLTAPQPITDLKAVSGNGKVDLSWSVVDKAVSYNIYRSTVKGGLYEKIASNVTQITYTDTEVTNGLKYVYAVTAVDNDGNESALSNEVEAYPAFPIGWAGNMNQVNTHVIGVNNPVEVYAEVWAQGLTDKPGQGENMIAQLGYRYIGDTVGDAVYNAVYNKVEGVEISKDWTWVDAQYVGDSGNNDKYMAKFVPDMVGTWEYIMRFSSNQGHDWTYTKGPDGKTDEAKQFTVVPSNDVETPTAPVLQQPGIESSRVTLNWSPSADDVAIFGYEIYKSSSETGPFIKIATVSDSVYNYVDTDVVNGNVYYYKVVAVDTSYNRTASNTVKATPDIIPIKVTFNVTIPDYTPDDGVNIAGNFPDAFWNPNANQMTKAGSNTYSITLTLNEGTQIEYKYARGSWDKVEKGEYGNEIDNRKITVVNQGSNTMVVNDTVQRWRDVPIYIYSPKDKTIVDANTSEIEIKGNTYKGAKVTINDESFVQQENGVFTKVVPLEYGVNTIKIHVEPSGDKNNELTKDITITVTREKPARRQNLLLLHQQKQQNHLKKYHKAK.

An N-terminal signal peptide occupies residues 1–31; that stretch reads MFKRRALGFLLAFLLVFTAVFGSMPMEFAKA. Ca(2+)-binding residues include D245, N247, D285, D340, N398, D400, N403, D404, G449, and D451. 2 residues coordinate substrate: H524 and R627. Residue D629 is the Nucleophile of the active site. E658 functions as the Proton donor in the catalytic mechanism. Substrate contacts are provided by residues 734–735, D794, and R798; that span reads HD. Fibronectin type-III domains lie at 928 to 1019 and 1164 to 1257; these read APQP…PAFP and TPTA…TPDI. The CBM20 domain occupies 1255-1362; that stretch reads PDIIPIKVTF…VNDTVQRWRD (108 aa).

It belongs to the glycosyl hydrolase 13 family. The cofactor is Ca(2+).

The catalysed reaction is Endohydrolysis of (1-&gt;4)-alpha-D-glucosidic linkages in polysaccharides containing three or more (1-&gt;4)-alpha-linked D-glucose units.. It catalyses the reaction Hydrolysis of (1-&gt;6)-alpha-D-glucosidic linkages in pullulan, amylopectin and glycogen, and in the alpha- and beta-limit dextrins of amylopectin and glycogen.. The chain is Amylopullulanase (apu) from Thermoanaerobacter thermohydrosulfuricus (Clostridium thermohydrosulfuricum).